Consider the following 157-residue polypeptide: Endoribonuclease YbeY (157 aa).

Zn(2+)-binding residues include histidine 122, histidine 126, and histidine 132.

It belongs to the endoribonuclease YbeY family. Zn(2+) serves as cofactor.

Its subcellular location is the cytoplasm. In terms of biological role, single strand-specific metallo-endoribonuclease involved in late-stage 70S ribosome quality control and in maturation of the 3' terminus of the 16S rRNA. This chain is Endoribonuclease YbeY, found in Bacillus velezensis (strain DSM 23117 / BGSC 10A6 / LMG 26770 / FZB42) (Bacillus amyloliquefaciens subsp. plantarum).